The chain runs to 210 residues: NDR1/HIN1-like protein 12 (210 aa).

A helical transmembrane segment spans residues 23-43 (GVIIGFIIIVLITIFLVWIIL). Residue asparagine 61 is glycosylated (N-linked (GlcNAc...) asparagine).

As to quaternary structure, may form oligomers or be a component of larger protein complex in plasma membranes. In terms of tissue distribution, expressed in leaves, stems and flowers, and, to a lower extent, in siliques and roots.

The protein resides in the cell membrane. In terms of biological role, may play a role in plant immunity. The protein is NDR1/HIN1-like protein 12 of Arabidopsis thaliana (Mouse-ear cress).